Here is a 266-residue protein sequence, read N- to C-terminus: Non-structural maintenance of chromosomes element 1 homolog (266 aa).

Positions 1–102 (MQGSTRRAGA…SVSKMATDFA (102 aa)) are interaction with NSMCE3. The RING-type; atypical zinc finger occupies 191-232 (CNICHSLLIQGQSCETCGIRMHLPCVAKYFQSTAEPRCPHCN). The segment at 246-266 (EKEREAGISKSSRKSLRTRQH) is disordered. Over residues 256 to 266 (SSRKSLRTRQH) the composition is skewed to basic residues.

The protein belongs to the NSE1 family. As to quaternary structure, component of the SMC5-SMC6 complex which consists at least of SMC5, SMC6, NSMCE2, NSMCE1, NSMCE4A or EID3 and NSMCE3. NSMCE1, NSMCE4A or EID3 and NSMCE3 probably form a subcomplex that bridges the head domains of the SMC5-SMC6 heterodimer. Interacts with NSMCE3. Post-translationally, ubiquitinated.

Its subcellular location is the nucleus. It is found in the chromosome. It localises to the telomere. The enzyme catalyses S-ubiquitinyl-[E2 ubiquitin-conjugating enzyme]-L-cysteine + [acceptor protein]-L-lysine = [E2 ubiquitin-conjugating enzyme]-L-cysteine + N(6)-ubiquitinyl-[acceptor protein]-L-lysine.. RING-type zinc finger-containing E3 ubiquitin ligase that assembles with melanoma antigen protein (MAGE) to catalyze the direct transfer of ubiquitin from E2 ubiquitin-conjugating enzyme to a specific substrate. Within MAGE-RING ubiquitin ligase complex, MAGE stimulates and specifies ubiquitin ligase activity likely through recruitment and/or stabilization of the E2 ubiquitin-conjugating enzyme at the E3:substrate complex. Involved in maintenance of genome integrity, DNA damage response and DNA repair. NSMCE3/MAGEG1 and NSMCE1 ubiquitin ligase are components of SMC5-SMC6 complex and may positively regulate homologous recombination-mediated DNA repair. The protein is Non-structural maintenance of chromosomes element 1 homolog (Nsmce1) of Rattus norvegicus (Rat).